We begin with the raw amino-acid sequence, 277 residues long: uncharacterized protein (277 aa).

The next 7 helical transmembrane spans lie at 23–43, 61–81, 117–137, 144–164, 197–217, 221–241, and 243–263; these read CIGG…TAFI, FLIY…IIGG, LVLL…FGIF, IIGA…VISL, YIIL…IVVL, IIDI…IIYI, and IKGI…VFSI.

This sequence to M.jannaschii MJ1189.

It is found in the cell membrane. This is an uncharacterized protein from Methanocaldococcus jannaschii (strain ATCC 43067 / DSM 2661 / JAL-1 / JCM 10045 / NBRC 100440) (Methanococcus jannaschii).